The chain runs to 87 residues: UPF0297 protein Sca_1229 (87 aa).

This sequence belongs to the UPF0297 family.

This chain is UPF0297 protein Sca_1229, found in Staphylococcus carnosus (strain TM300).